A 423-amino-acid chain; its full sequence is Cyclin-B2-1 (423 aa).

Residues 1–61 form a disordered region; it reads MDRASENRRL…EKSGKEEQKP (61 aa). Residues 49–60 show a composition bias toward basic and acidic residues; sequence PMLEKSGKEEQK.

The protein belongs to the cyclin family. Cyclin AB subfamily. As to quaternary structure, interacts with CDKB2-1. As to expression, expressed in the intercalary meristem and the elongation zone of internodes. Expressed in adventitious roots at all nodes under submergence conditions.

Functionally, involved in the control of the cell cycle at the G2/M (mitosis) transition. May activate CDKB2-1 kinase. The polypeptide is Cyclin-B2-1 (CYCB2-1) (Oryza sativa subsp. indica (Rice)).